A 198-amino-acid chain; its full sequence is Ribonuclease HII (198 aa).

In terms of domain architecture, RNase H type-2 spans Met1–Leu198. A divalent metal cation is bound by residues Asp6, Glu7, and Asp112.

The protein belongs to the RNase HII family. Requires Mn(2+) as cofactor. Mg(2+) serves as cofactor.

Its subcellular location is the cytoplasm. The catalysed reaction is Endonucleolytic cleavage to 5'-phosphomonoester.. Endonuclease that specifically degrades the RNA of RNA-DNA hybrids. The polypeptide is Ribonuclease HII (Treponema denticola (strain ATCC 35405 / DSM 14222 / CIP 103919 / JCM 8153 / KCTC 15104)).